The chain runs to 407 residues: Venom metalloproteinase 3 (407 aa).

4 N-linked (GlcNAc...) asparagine glycosylation sites follow: N42, N91, N126, and N166. One can recognise a Peptidase M12B domain in the interval 191 to 405 (FYPKLLVLVD…TSAACLKDTY (215 aa)). Disulfide bonds link C317/C400 and C356/C384. H340 is a Zn(2+) binding site. E341 is an active-site residue. Zn(2+) contacts are provided by H344 and H350. Residue N391 is glycosylated (N-linked (GlcNAc...) asparagine).

It in the C-terminal section; belongs to the venom metalloproteinase (M12B) family. In terms of assembly, monomer. Zn(2+) serves as cofactor. Expressed by the venom gland.

The protein localises to the secreted. Its activity is regulated as follows. The gelatinase activity is inhibited by EDTA. In terms of biological role, the recombinant protein has gelatinase activity. In vivo, injection of this recombinant into fifth instar L.oleracea (host) larvae results in partial insect mortality associated with the molt to sixth instar, with surviving insects showing retarded development and growth. The protein is Venom metalloproteinase 3 of Eulophus pennicornis (Parasitoid wasp).